The sequence spans 155 residues: MPHPLLPELETLATSVAADQGFELCGIQLLTHLAPMTLEVHIRRSNGVDVNMDDCAGFSGTLGEALESAQLLTEAYVLEISSPGIGETLSSDRDFQTFRGFPVEVVHRDRDDTEQRLEGLLLERDEDTLQINIRGRIKRLPRDHVLSVRLTSPGS.

It belongs to the RimP family.

The protein resides in the cytoplasm. Its function is as follows. Required for maturation of 30S ribosomal subunits. This Parasynechococcus marenigrum (strain WH8102) protein is Ribosome maturation factor RimP.